Reading from the N-terminus, the 586-residue chain is BTB/POZ domain and ankyrin repeat-containing protein NPR1 (586 aa).

A BTB domain is found at 63–139 (SDADIVVEGI…VYTGKLKPSP (77 aa)). The C2HC NPR-type zinc finger occupies 142-156 (VSTCVHNVCAHDACR). The Zn(2+) site is built by Cys-145, Cys-150, His-152, and Cys-155. ANK repeat units follow at residues 266–296 (KRIRRIHKALDSDDVELVKLLLTESNITLDE), 298–325 (NALHYAAAYCDPKVVTEVLALGLADVNL), and 329–358 (RGYTALHIAVMRKEPSIIVLLLTKGARASE). Residues 388-522 (EANKDRICID…LDKFIDDDLP (135 aa)) are salicylic acid-binding core (SBC). Arg-433 contributes to the salicylate binding site. Positions 561–586 (NLSGLSSSSSTTSPEKIGANQKVREP) are disordered. Over residues 562–573 (LSGLSSSSSTTS) the composition is skewed to low complexity.

Belongs to the plant 'ANKYRIN-BTB/POZ' family. 'NPR1-like' subfamily. As to expression, highly expressed in leaves. Expressed at low levels in roots and stems.

It localises to the cytoplasm. It is found in the nucleus. The protein localises to the nuclear body. Its pathway is protein modification; protein ubiquitination. Functionally, salicylic acid (SA)-binding substrate-specific adapter of an E3 ubiquitin-protein ligase complex (CUL3-RBX1-BTB) which mediates the ubiquitination and subsequent proteasomal degradation of target proteins. Transcription cofactor that represses gene expression in the absence of salicylic acid (SA), when attached to negative cis-elements (W-box) with WRKY transcription factors, but stimulates gene expression upon activation by SA, when sumoylated and attached to positive cis-elements (as-1) with TGA transcription factors, thus confering immunity through a series of gene regulations ending in a significant increase in antimicrobial and defense genes expression. Probable component of the salicylic acid (SA) defense signaling pathway and pathogen-induced systemic acquired resistance (SAR). May be involved in disease resistance against fungal pathogens. May be involved in tolerance to salt and osmotic stresses. This chain is BTB/POZ domain and ankyrin repeat-containing protein NPR1, found in Malus hupehensis (Chinese crab apple).